The sequence spans 155 residues: Small ribosomal subunit protein uS7 (155 aa).

Belongs to the universal ribosomal protein uS7 family. In terms of assembly, part of the 30S ribosomal subunit. Contacts proteins S9 and S11.

One of the primary rRNA binding proteins, it binds directly to 16S rRNA where it nucleates assembly of the head domain of the 30S subunit. Is located at the subunit interface close to the decoding center, probably blocks exit of the E-site tRNA. The polypeptide is Small ribosomal subunit protein uS7 (Cytophaga hutchinsonii (strain ATCC 33406 / DSM 1761 / CIP 103989 / NBRC 15051 / NCIMB 9469 / D465)).